The following is a 286-amino-acid chain: Putative ribosome-inactivating protein (286 aa).

Positions 1 to 21 are cleaved as a signal peptide; the sequence is MNRFSVLMCLVILSIFHGVPT. N103 and N110 each carry an N-linked (GlcNAc...) asparagine glycan. E185 is a catalytic residue. Residue N252 is glycosylated (N-linked (GlcNAc...) asparagine).

It belongs to the ribosome-inactivating protein family. Type 1 RIP subfamily.

The enzyme catalyses Endohydrolysis of the N-glycosidic bond at one specific adenosine on the 28S rRNA.. This chain is Putative ribosome-inactivating protein, found in Cucumis ficifolius (Cucumis figarei).